The chain runs to 89 residues: Large ribosomal subunit protein bL27 (89 aa).

The interval 1–20 (MAHKKAGGSSRNGRDSIGRR) is disordered.

This sequence belongs to the bacterial ribosomal protein bL27 family.

The sequence is that of Large ribosomal subunit protein bL27 from Ruegeria pomeroyi (strain ATCC 700808 / DSM 15171 / DSS-3) (Silicibacter pomeroyi).